A 469-amino-acid chain; its full sequence is A-type ATP synthase subunit B (469 aa).

This sequence belongs to the ATPase alpha/beta chains family. Has multiple subunits with at least A(3), B(3), C, D, E, F, H, I and proteolipid K(x).

It localises to the cell membrane. Functionally, component of the A-type ATP synthase that produces ATP from ADP in the presence of a proton gradient across the membrane. The B chain is a regulatory subunit. This is A-type ATP synthase subunit B from Staphylothermus marinus (strain ATCC 43588 / DSM 3639 / JCM 9404 / F1).